The sequence spans 298 residues: ATP synthase F(1) complex subunit gamma, mitochondrial (298 aa).

Residues 1–25 (MFSRASVVGLSACAVQPQWIQVRNM) constitute a mitochondrion transit peptide. An N6-acetyllysine modification is found at K39. At K49 the chain carries N6-succinyllysine. N6-acetyllysine is present on K55. Residue K115 is modified to N6-acetyllysine; alternate. The residue at position 115 (K115) is an N6-succinyllysine; alternate. Residue K138 is modified to N6-acetyllysine. A Phosphoserine modification is found at S146. N6-acetyllysine; alternate is present on K154. Residue K154 is modified to N6-succinyllysine; alternate. At K197 the chain carries N6-acetyllysine. An N6-succinyllysine modification is found at K270.

Belongs to the ATPase gamma chain family. In terms of assembly, component of the ATP synthase complex composed at least of ATP5F1A/subunit alpha, ATP5F1B/subunit beta, ATP5MC1/subunit c (homooctomer), MT-ATP6/subunit a, MT-ATP8/subunit 8, ATP5ME/subunit e, ATP5MF/subunit f, ATP5MG/subunit g, ATP5MK/subunit k, ATP5MJ/subunit j, ATP5F1C/subunit gamma, ATP5F1D/subunit delta, ATP5F1E/subunit epsilon, ATP5PF/subunit F6, ATP5PB/subunit b, ATP5PD/subunit d, ATP5PO/subunit OSCP. ATP synthase complex consists of a soluble F(1) head domain (subunits alpha(3) and beta(3)) - the catalytic core - and a membrane F(0) domain - the membrane proton channel (subunits c, a, 8, e, f, g, k and j). These two domains are linked by a central stalk (subunits gamma, delta, and epsilon) rotating inside the F1 region and a stationary peripheral stalk (subunits F6, b, d, and OSCP). Interacts with FLVCR2; this interaction occurs in the absence of heme and is disrupted upon heme binding.

The protein resides in the mitochondrion inner membrane. Subunit gamma, of the mitochondrial membrane ATP synthase complex (F(1)F(0) ATP synthase or Complex V) that produces ATP from ADP in the presence of a proton gradient across the membrane which is generated by electron transport complexes of the respiratory chain. ATP synthase complex consist of a soluble F(1) head domain - the catalytic core - and a membrane F(1) domain - the membrane proton channel. These two domains are linked by a central stalk rotating inside the F(1) region and a stationary peripheral stalk. During catalysis, ATP synthesis in the catalytic domain of F(1) is coupled via a rotary mechanism of the central stalk subunits to proton translocation. In vivo, can only synthesize ATP although its ATP hydrolase activity can be activated artificially in vitro. With the central stalk subunit delta, is essential for the biogenesis of F(1) catalytic part of the ATP synthase complex namely in the formation of F1 assembly intermediate. This is ATP synthase F(1) complex subunit gamma, mitochondrial from Mus musculus (Mouse).